The primary structure comprises 258 residues: Probable dihydroorotate dehydrogenase B (NAD(+)), electron transfer subunit (258 aa).

In terms of domain architecture, FAD-binding FR-type spans 1-90; it reads MRPISATIKE…RGPYGNGWEI (90 aa). Residues cysteine 210, cysteine 215, cysteine 218, and cysteine 228 each contribute to the [2Fe-2S] cluster site.

Belongs to the PyrK family. As to quaternary structure, heterotetramer of 2 PyrK and 2 PyrD type B subunits. Requires [2Fe-2S] cluster as cofactor. FAD is required as a cofactor.

The protein operates within pyrimidine metabolism; UMP biosynthesis via de novo pathway; orotate from (S)-dihydroorotate (NAD(+) route): step 1/1. In terms of biological role, responsible for channeling the electrons from the oxidation of dihydroorotate from the FMN redox center in the PyrD type B subunit to the ultimate electron acceptor NAD(+). In Methanocella arvoryzae (strain DSM 22066 / NBRC 105507 / MRE50), this protein is Probable dihydroorotate dehydrogenase B (NAD(+)), electron transfer subunit.